The primary structure comprises 61 residues: Small ribosomal subunit protein uS14 (61 aa).

Zn(2+) is bound by residues C24, C27, C40, and C43.

It belongs to the universal ribosomal protein uS14 family. Zinc-binding uS14 subfamily. As to quaternary structure, part of the 30S ribosomal subunit. Contacts proteins S3 and S10. It depends on Zn(2+) as a cofactor.

Its function is as follows. Binds 16S rRNA, required for the assembly of 30S particles and may also be responsible for determining the conformation of the 16S rRNA at the A site. The polypeptide is Small ribosomal subunit protein uS14 (Frankia alni (strain DSM 45986 / CECT 9034 / ACN14a)).